Here is a 136-residue protein sequence, read N- to C-terminus: Type II nicking enzyme V.XorIIP (136 aa).

It belongs to the Vsr family.

Its function is as follows. May nick XorII sequences that contain T/G mispairs resulting from m5C-deamination. If unrepaired, these mismatches can lead to C-to-T transition mutations. The very short patch (VSP) repair process counteracts the mutagenic process by repairing the mismatches in favor of the G-containing strand. This enzyme is an endonuclease that nicks double-stranded DNA within the sequence CGATCG (C-methylation site unknown) next to the thymidine residue that is mismatched to 2'-deoxyguanosine. The incision is mismatch-dependent and strand-specific. This chain is Type II nicking enzyme V.XorIIP, found in Xanthomonas oryzae pv. oryzae (strain KACC10331 / KXO85).